Consider the following 585-residue polypeptide: MSLFQVYARALQYLAVHKFRVGAIVIANIVLAAITIAEPILFGRIIDAISSQKDVAPMLLLWAGFGVFNTIAFVLVSREADRLAHGRRASLLTEAFGRIVSMPLSWHSQRGTSNALHTLLRACETLFGLWLEFMRQHLATAVALMLLIPTAFAMDVRLSLILVVLGAAYVMISKVVMSRTKEGQAAVEGHYHTVFSHVSDSISNVSVVHSYNRIEAETRELKKFTQRLLSAQYPVLDWWALASGLNRIASTISMMAILVIGTVLVQRGELGVGEVIAFIGFANLLIGRLDQMKAFATQIFEARAKLEDFFQLEDSVQDREEPADAGELKGVVGEVEFRDISFDFANSAQGVRNVSFKAKAGQTIAIVGPTGAGKTTLVNLLQRVHEPKHGQILIDGVDIATVTRKSLRRSIATVFQDAGLMNRSIGENIRLGREDASLDEVMAAAEAAAASDFIEDRLNGYDTVVGERGNRLSGGERQRVAIARAILKNAPILVLDEATSALDVETEARVKDAIDALRKDRTTFIIAHRLSTVREADLVIFMDQGRVVEMGGFHELSQSNGRFAALLRASGILTDEDVRKSLTAA.

The region spanning V21–E301 is the ABC transmembrane type-1 domain. Transmembrane regions (helical) follow at residues G22–F42, V55–L75, Q136–V156, L158–S178, L245–V265, and E269–L289. The ABC transporter domain occupies V335 to A569. Residue G368–T375 participates in ATP binding.

The protein belongs to the ABC transporter superfamily. Beta-(1--&gt;2)glucan exporter (TC 3.A.1.108.1) family. As to quaternary structure, homodimer.

It is found in the cell inner membrane. The enzyme catalyses [(1-&gt;2)-beta-D-glucosyl](n)(in) + ATP + H2O = [(1-&gt;2)-beta-D-glucosyl](n)(out) + ADP + phosphate + H(+). Involved in beta-(1--&gt;2)glucan export which is required for nodulation of legume roots. May be involved in other classes of oligosaccharides export. Transmembrane domains (TMD) form a pore in the inner membrane and the ATP-binding domain (NBD) is responsible for energy generation. The chain is Beta-(1--&gt;2)glucan export ATP-binding/permease protein NdvA from Rhizobium meliloti (strain 1021) (Ensifer meliloti).